Consider the following 343-residue polypeptide: Anthranilate phosphoribosyltransferase (343 aa).

5-phospho-alpha-D-ribose 1-diphosphate-binding positions include G81, 84–85 (GD), 91–94 (NVST), 109–117 (KHGNRSVSS), and S121. Position 81 (G81) interacts with anthranilate. Mg(2+) is bound at residue S93. N112 contacts anthranilate. Anthranilate is bound at residue R167. Positions 226 and 227 each coordinate Mg(2+).

This sequence belongs to the anthranilate phosphoribosyltransferase family. As to quaternary structure, homodimer. It depends on Mg(2+) as a cofactor.

The enzyme catalyses N-(5-phospho-beta-D-ribosyl)anthranilate + diphosphate = 5-phospho-alpha-D-ribose 1-diphosphate + anthranilate. The protein operates within amino-acid biosynthesis; L-tryptophan biosynthesis; L-tryptophan from chorismate: step 2/5. Functionally, catalyzes the transfer of the phosphoribosyl group of 5-phosphorylribose-1-pyrophosphate (PRPP) to anthranilate to yield N-(5'-phosphoribosyl)-anthranilate (PRA). This is Anthranilate phosphoribosyltransferase from Chromohalobacter salexigens (strain ATCC BAA-138 / DSM 3043 / CIP 106854 / NCIMB 13768 / 1H11).